The following is a 122-amino-acid chain: Ribonuclease P protein component (122 aa).

It belongs to the RnpA family. In terms of assembly, consists of a catalytic RNA component (M1 or rnpB) and a protein subunit.

It catalyses the reaction Endonucleolytic cleavage of RNA, removing 5'-extranucleotides from tRNA precursor.. Its function is as follows. RNaseP catalyzes the removal of the 5'-leader sequence from pre-tRNA to produce the mature 5'-terminus. It can also cleave other RNA substrates such as 4.5S RNA. The protein component plays an auxiliary but essential role in vivo by binding to the 5'-leader sequence and broadening the substrate specificity of the ribozyme. This is Ribonuclease P protein component from Roseiflexus castenholzii (strain DSM 13941 / HLO8).